A 502-amino-acid polypeptide reads, in one-letter code: Cytochrome P450 83A1 (502 aa).

A helical transmembrane segment spans residues 1–21; the sequence is MEDIIIGVVALAAVLLFFLYQ. C442 lines the heme pocket.

It belongs to the cytochrome P450 family. Heme is required as a cofactor.

Its subcellular location is the endoplasmic reticulum membrane. The catalysed reaction is an (E)-omega-(methylsulfanyl)-alkanal oxime + glutathione + reduced [NADPH--hemoprotein reductase] + O2 = an S-[(1E)-1-(hydroxyimino)-omega-(methylsulfanyl)alkyl]-L-glutathione + oxidized [NADPH--hemoprotein reductase] + 2 H2O + H(+). Its function is as follows. Involved in the metabolism of aliphatic and aromatic oximes. Involved in the biosynthesis of both short-chain and long-chain aliphatic glucosinolates. The chain is Cytochrome P450 83A1 (CYP83A1) from Arabidopsis thaliana (Mouse-ear cress).